Consider the following 331-residue polypeptide: 2-hydroxyacid dehydrogenase homolog (331 aa).

Residues 154–155, 234–236, and aspartate 260 each bind NAD(+); these read HI and TSR. Residue arginine 236 is part of the active site. Glutamate 265 is an active-site residue. Catalysis depends on histidine 297, which acts as the Proton donor. 297-300 provides a ligand contact to NAD(+); sequence HQAF.

Belongs to the D-isomer specific 2-hydroxyacid dehydrogenase family.

This Zymomonas mobilis subsp. mobilis (strain ATCC 31821 / ZM4 / CP4) protein is 2-hydroxyacid dehydrogenase homolog (ddh).